Here is a 445-residue protein sequence, read N- to C-terminus: Bifunctional protein GlmU (445 aa).

A pyrophosphorylase region spans residues 1–218 (MRALVLAAGK…LLEITGVNTR (218 aa)). Residues 6-9 (LAAG), K20, Q69, 74-75 (GT), 96-98 (YGD), G134, E147, N162, and N216 contribute to the UDP-N-acetyl-alpha-D-glucosamine site. D98 serves as a coordination point for Mg(2+). A Mg(2+)-binding site is contributed by N216. The segment at 219–239 (KTLVWLEEQLRMRKIEELLEN) is linker. An N-acetyltransferase region spans residues 240-445 (GVTILDPATT…GWVLKKRKEE (206 aa)). UDP-N-acetyl-alpha-D-glucosamine contacts are provided by R321 and K339. The active-site Proton acceptor is H351. Residues Y354 and N365 each contribute to the UDP-N-acetyl-alpha-D-glucosamine site. Acetyl-CoA contacts are provided by residues A368, 374 to 375 (NY), S393, A411, and R428.

It in the N-terminal section; belongs to the N-acetylglucosamine-1-phosphate uridyltransferase family. This sequence in the C-terminal section; belongs to the transferase hexapeptide repeat family. In terms of assembly, homotrimer. It depends on Mg(2+) as a cofactor.

It is found in the cytoplasm. It catalyses the reaction alpha-D-glucosamine 1-phosphate + acetyl-CoA = N-acetyl-alpha-D-glucosamine 1-phosphate + CoA + H(+). It carries out the reaction N-acetyl-alpha-D-glucosamine 1-phosphate + UTP + H(+) = UDP-N-acetyl-alpha-D-glucosamine + diphosphate. Its pathway is nucleotide-sugar biosynthesis; UDP-N-acetyl-alpha-D-glucosamine biosynthesis; N-acetyl-alpha-D-glucosamine 1-phosphate from alpha-D-glucosamine 6-phosphate (route II): step 2/2. The protein operates within nucleotide-sugar biosynthesis; UDP-N-acetyl-alpha-D-glucosamine biosynthesis; UDP-N-acetyl-alpha-D-glucosamine from N-acetyl-alpha-D-glucosamine 1-phosphate: step 1/1. It participates in bacterial outer membrane biogenesis; LPS lipid A biosynthesis. Catalyzes the last two sequential reactions in the de novo biosynthetic pathway for UDP-N-acetylglucosamine (UDP-GlcNAc). The C-terminal domain catalyzes the transfer of acetyl group from acetyl coenzyme A to glucosamine-1-phosphate (GlcN-1-P) to produce N-acetylglucosamine-1-phosphate (GlcNAc-1-P), which is converted into UDP-GlcNAc by the transfer of uridine 5-monophosphate (from uridine 5-triphosphate), a reaction catalyzed by the N-terminal domain. This Thermotoga maritima (strain ATCC 43589 / DSM 3109 / JCM 10099 / NBRC 100826 / MSB8) protein is Bifunctional protein GlmU.